The primary structure comprises 492 residues: Probable protein phosphatase 2C 33 (492 aa).

The interval 1–46 (MGSCLSAESRSPRPGSPCSPAFSVRKRKNSKKRPGSRNSSFDYRRE) is disordered. Residues 24-35 (VRKRKNSKKRPG) show a composition bias toward basic residues. Residues 64-393 (VACIYTQQGK…DDCAAVCLYL (330 aa)) enclose the PPM-type phosphatase domain. The Mn(2+) site is built by Asp-100, Gly-101, Asp-338, and Asp-384. Positions 406–468 (SISKLEDGEE…ADNLDSEPGT (63 aa)) are disordered. Acidic residues predominate over residues 412–427 (DGEEEELKATTEDDDA). Over residues 441 to 460 (SGKEIALDESETEKLIKEAD) the composition is skewed to basic and acidic residues.

This sequence belongs to the PP2C family. Mg(2+) serves as cofactor. The cofactor is Mn(2+).

The enzyme catalyses O-phospho-L-seryl-[protein] + H2O = L-seryl-[protein] + phosphate. It catalyses the reaction O-phospho-L-threonyl-[protein] + H2O = L-threonyl-[protein] + phosphate. The sequence is that of Probable protein phosphatase 2C 33 (PPC6-1) from Arabidopsis thaliana (Mouse-ear cress).